The sequence spans 451 residues: Tryptophan--tRNA ligase (451 aa).

ATP contacts are provided by residues 10-12 (TTT) and 18-19 (GN). Positions 11–19 (TTGTPHLGN) match the 'HIGH' region motif. Asp-143 contacts L-tryptophan. Residues 155–157 (GRD), Leu-195, and 202–206 (KMSKS) each bind ATP. The 'KMSKS' region signature appears at 202 to 206 (KMSKS).

Belongs to the class-I aminoacyl-tRNA synthetase family. Homodimer.

The protein localises to the cytoplasm. The enzyme catalyses tRNA(Trp) + L-tryptophan + ATP = L-tryptophyl-tRNA(Trp) + AMP + diphosphate + H(+). In terms of biological role, catalyzes the attachment of tryptophan to tRNA(Trp). This is Tryptophan--tRNA ligase from Bordetella pertussis (strain Tohama I / ATCC BAA-589 / NCTC 13251).